Here is a 143-residue protein sequence, read N- to C-terminus: Flagellar assembly factor FliW (143 aa).

It belongs to the FliW family. Interacts with translational regulator CsrA and flagellin(s).

The protein resides in the cytoplasm. In terms of biological role, acts as an anti-CsrA protein, binds CsrA and prevents it from repressing translation of its target genes, one of which is flagellin. Binds to flagellin and participates in the assembly of the flagellum. The polypeptide is Flagellar assembly factor FliW (Clostridium botulinum (strain Langeland / NCTC 10281 / Type F)).